A 305-amino-acid chain; its full sequence is Acetaldehyde dehydrogenase (305 aa).

An NAD(+)-binding site is contributed by 13–16; sequence SGNI. The Acyl-thioester intermediate role is filled by C128. NAD(+)-binding positions include 159-167 and N278; that span reads SAGPGTRQN.

Belongs to the acetaldehyde dehydrogenase family.

The enzyme catalyses acetaldehyde + NAD(+) + CoA = acetyl-CoA + NADH + H(+). The sequence is that of Acetaldehyde dehydrogenase from Roseiflexus castenholzii (strain DSM 13941 / HLO8).